A 512-amino-acid polypeptide reads, in one-letter code: Maturase K (512 aa).

The protein belongs to the intron maturase 2 family. MatK subfamily.

Its subcellular location is the plastid. It is found in the chloroplast. In terms of biological role, usually encoded in the trnK tRNA gene intron. Probably assists in splicing its own and other chloroplast group II introns. The chain is Maturase K from Oenothera parviflora (Small-flowered evening primrose).